We begin with the raw amino-acid sequence, 121 residues long: Large ribosomal subunit protein bL12 (121 aa).

This sequence belongs to the bacterial ribosomal protein bL12 family. Homodimer. Part of the ribosomal stalk of the 50S ribosomal subunit. Forms a multimeric L10(L12)X complex, where L10 forms an elongated spine to which 2 to 4 L12 dimers bind in a sequential fashion. Binds GTP-bound translation factors.

Forms part of the ribosomal stalk which helps the ribosome interact with GTP-bound translation factors. Is thus essential for accurate translation. The polypeptide is Large ribosomal subunit protein bL12 (Pseudomonas fluorescens (strain ATCC BAA-477 / NRRL B-23932 / Pf-5)).